The primary structure comprises 535 residues: Large neutral amino acids transporter small subunit 2 (535 aa).

Residues 1–17 (MEEGARHRNNTEKKHPG) show a composition bias toward basic and acidic residues. The interval 1–30 (MEEGARHRNNTEKKHPGGGESDASPEAGSG) is disordered. The Cytoplasmic portion of the chain corresponds to 1-44 (MEEGARHRNNTEKKHPGGGESDASPEAGSGGGGVALKKEIGLVS). S29 carries the phosphoserine modification. A helical transmembrane segment spans residues 45–65 (ACGIIVGNIIGSGIFVSPKGV). I53 contacts L-leucine. Residues 66 to 73 (LENAGSVG) are Extracellular-facing. Residues 74–95 (LALIVWIVTGFITVVGALCYAE) traverse the membrane as a helical segment. Topologically, residues 96 to 116 (LGVTIPKSGGDYSYVKDIFGG) are cytoplasmic. The helical transmembrane segment at 117–149 (LAGFLRLWIAVLVIYPTNQAVIALTFSNYVLQP) threads the bilayer. Residue N134 participates in L-tryptophan binding. The Extracellular segment spans residues 150–157 (LFPTCFPP). Residues 158–178 (ESGLRLLAAICLLLLTWVNCS) form a helical membrane-spanning segment. Residues 179–181 (SVR) lie on the Cytoplasmic side of the membrane. Residues 182-210 (WATRVQDIFTAGKLLALALIIIMGIVQIC) form a helical membrane-spanning segment. The Extracellular portion of the chain corresponds to 211–230 (KGEYFWLEPKNAFENFQEPD). A helical membrane pass occupies residues 231-252 (IGLVALAFLQGSFAYGGWNFLN). G246 contributes to the L-leucine binding site. Over 253-265 (YVTEELVDPYKNL) the chain is Cytoplasmic. Residues 266-287 (PRAIFISIPLVTFVYVFANVAY) form a helical membrane-spanning segment. Residues 288-312 (VTAMSPQELLASNAVAVTFGEKLLG) are Extracellular-facing. A helical membrane pass occupies residues 313–338 (VMAWIMPISVALSTFGGVNGSLFTSS). Residues 339–364 (RLFFAGAREGHLPSVLAMIHVKRCTP) lie on the Cytoplasmic side of the membrane. The chain crosses the membrane as a helical span at residues 365–382 (IPALLFTCISTLLMLVTS). The Extracellular portion of the chain corresponds to 383 to 386 (DMYT). A helical transmembrane segment spans residues 387–408 (LINYVGFINYLFYGVTVAGQIV). N395 contributes to the L-tryptophan binding site. At 409-423 (LRWKKPDIPRPIKIN) the chain is on the cytoplasmic side. A run of 2 helical transmembrane segments spans residues 424–446 (LLFPIIYLLFWAFLLVFSLWSEP) and 447–466 (VVCGIGLAIMLTGVPVYFLG). Residues 467-535 (VYWQHKPKCF…DKDVAGQPQP (69 aa)) are Cytoplasmic-facing. The segment at 502-535 (SGTEEANEDMEEQQQPMYQPTPTKDKDVAGQPQP) is disordered. Residues 514–523 (QQQPMYQPTP) show a composition bias toward polar residues.

It belongs to the amino acid-polyamine-organocation (APC) superfamily. L-type amino acid transporter (LAT) (TC 2.A.3.8) family. Disulfide-linked heterodimer composed of the catalytic light chain subunit SLC7A8 and the heavy chain subunit SLC3A2. SLC3A2 acts as chaperones for correct plasma membrane trafficking and stabilization of SLC7A8 and modulates the substrate affinity and specificity of SLC7A8. ICAM-1 associates with the heterodimer SLC3A2/SLC7A8; this interaction regulates SLC7A8 activity. As to expression, strongest expression is observed in kidney and moderate expression in placenta and brain, followed by liver, prostate, testis, ovary, lymph node, thymus, spleen, skeletal muscle and heart. Also expressed in fetal liver as well as in the retinal pigment epithelial cell line ARPE-19 and the intestinal epithelial cell line Caco-2.

The protein resides in the cell membrane. It localises to the basolateral cell membrane. The catalysed reaction is L-histidine(in) + L-phenylalanine(out) = L-histidine(out) + L-phenylalanine(in). It catalyses the reaction L-tryptophan(in) + L-phenylalanine(out) = L-tryptophan(out) + L-phenylalanine(in). The enzyme catalyses L-isoleucine(in) + L-phenylalanine(out) = L-isoleucine(out) + L-phenylalanine(in). It carries out the reaction L-valine(in) + L-phenylalanine(out) = L-valine(out) + L-phenylalanine(in). The catalysed reaction is L-leucine(in) + L-phenylalanine(out) = L-leucine(out) + L-phenylalanine(in). It catalyses the reaction L-glutamine(in) + L-phenylalanine(out) = L-glutamine(out) + L-phenylalanine(in). The enzyme catalyses L-cysteine(in) + L-phenylalanine(out) = L-cysteine(out) + L-phenylalanine(in). It carries out the reaction L-phenylalanine(out) + L-methionine(in) = L-phenylalanine(in) + L-methionine(out). The catalysed reaction is L-leucine(out) + L-methionine(in) = L-leucine(in) + L-methionine(out). It catalyses the reaction L-cysteine(out) + L-methionine(in) = L-cysteine(in) + L-methionine(out). The enzyme catalyses S-methylmercury-L-cysteine(out) + L-methionine(in) = S-methylmercury-L-cysteine(in) + L-methionine(out). It carries out the reaction S-methylmercury-L-cysteine(in) + L-leucine(out) = S-methylmercury-L-cysteine(out) + L-leucine(in). The catalysed reaction is S-methylmercury-L-cysteine(in) + L-phenylalanine(out) = S-methylmercury-L-cysteine(out) + L-phenylalanine(in). It catalyses the reaction L-phenylalanine(out) + L-serine(in) = L-phenylalanine(in) + L-serine(out). The enzyme catalyses L-phenylalanine(out) + glycine(in) = L-phenylalanine(in) + glycine(out). It carries out the reaction L-phenylalanine(out) + L-alanine(in) = L-phenylalanine(in) + L-alanine(out). The catalysed reaction is 3,3'-diiodo-L-thyronine(out) = 3,3'-diiodo-L-thyronine(in). It catalyses the reaction 3,3',5-triiodo-L-thyronine(out) = 3,3',5-triiodo-L-thyronine(in). The enzyme catalyses L-dopa(out) + L-phenylalanine(in) = L-dopa(in) + L-phenylalanine(out). Its activity is regulated as follows. Inhibited by the L-type inhibitor 2-Aminobicyclo-(2,2,1)-heptane-2-carboxylic acid (BCH). Functionally, associates with SLC3A2 to form a functional heterodimeric complex that translocates small and large neutral amino acids with broad specificity and a stoichiometry of 1:1. Functions as amino acid antiporter mediating the influx of extracellular essential amino acids mainly in exchange with the efflux of highly concentrated intracellular amino acids. Has relatively symmetrical selectivities but strongly asymmetrical substrate affinities at both the intracellular and extracellular sides of the transporter. This asymmetry allows SLC7A8 to regulate intracellular amino acid pools (mM concentrations) by exchange with external amino acids (uM concentration range), equilibrating the relative concentrations of different amino acids across the plasma membrane instead of mediating their net uptake. May play an essential role in the reabsorption of neutral amino acids from the epithelial cells to the bloodstream in the kidney. Involved in the uptake of methylmercury (MeHg) when administered as the L-cysteine or D,L-homocysteine complexes, and hence plays a role in metal ion homeostasis and toxicity. Involved in the cellular activity of small molecular weight nitrosothiols, via the stereoselective transport of L-nitrosocysteine (L-CNSO) across the transmembrane. Imports the thyroid hormone diiodothyronine (T2) and to a smaller extent triiodothyronine (T3) but not rT 3 or thyroxine (T4). Mediates the uptake of L-DOPA. May participate in auditory function. The protein is Large neutral amino acids transporter small subunit 2 of Homo sapiens (Human).